The primary structure comprises 937 residues: Aconitate hydratase A (937 aa).

Positions 439, 505, and 508 each coordinate [4Fe-4S] cluster. A disordered region spans residues 898–921 (KKESKSTQSTTSKGCGSADTSSET).

Belongs to the aconitase/IPM isomerase family. As to quaternary structure, monomer. The cofactor is [4Fe-4S] cluster.

The enzyme catalyses citrate = D-threo-isocitrate. It catalyses the reaction (2S,3R)-3-hydroxybutane-1,2,3-tricarboxylate = 2-methyl-cis-aconitate + H2O. It functions in the pathway carbohydrate metabolism; tricarboxylic acid cycle; isocitrate from oxaloacetate: step 2/2. The protein operates within organic acid metabolism; propanoate degradation. In terms of biological role, involved in the catabolism of short chain fatty acids (SCFA) via the tricarboxylic acid (TCA)(acetyl degradation route) and probably the 2-methylcitrate cycle I (propionate degradation route). Catalyzes the reversible isomerization of citrate to isocitrate via cis-aconitate. Could catalyze the hydration of 2-methyl-cis-aconitate to yield (2R,3S)-2-methylisocitrate. The apo form of AcnA functions as a RNA-binding regulatory protein. This Francisella tularensis subsp. holarctica (strain LVS) protein is Aconitate hydratase A (acn).